The following is a 220-amino-acid chain: Probable septum site-determining protein MinC (220 aa).

It belongs to the MinC family. In terms of assembly, interacts with MinD and FtsZ.

Its function is as follows. Cell division inhibitor that blocks the formation of polar Z ring septums. Rapidly oscillates between the poles of the cell to destabilize FtsZ filaments that have formed before they mature into polar Z rings. Prevents FtsZ polymerization. The protein is Probable septum site-determining protein MinC of Vibrio vulnificus (strain CMCP6).